The sequence spans 105 residues: Cell division protein FtsB (105 aa).

Residues 1–3 are Cytoplasmic-facing; it reads MGK. Residues 4-21 traverse the membrane as a helical segment; sequence LTLLLLVLLGWLQYSLWL. Topologically, residues 22–105 are periplasmic; it reads GKNGVHDLVR…PAAPATQDNQ (84 aa). Residues 28–62 are a coiled coil; that stretch reads DLVRVESDVAAQQSNNAQLKARNDQLFAEIDDLNG.

It belongs to the FtsB family. As to quaternary structure, part of a complex composed of FtsB, FtsL and FtsQ.

It localises to the cell inner membrane. Its function is as follows. Essential cell division protein. May link together the upstream cell division proteins, which are predominantly cytoplasmic, with the downstream cell division proteins, which are predominantly periplasmic. In Sodalis glossinidius (strain morsitans), this protein is Cell division protein FtsB.